The primary structure comprises 165 residues: UPF0303 protein BceJ2315_15790 (165 aa).

It belongs to the UPF0303 family.

This Burkholderia cenocepacia (strain ATCC BAA-245 / DSM 16553 / LMG 16656 / NCTC 13227 / J2315 / CF5610) (Burkholderia cepacia (strain J2315)) protein is UPF0303 protein BceJ2315_15790.